Here is a 149-residue protein sequence, read N- to C-terminus: Nucleoside diphosphate kinase 1 (149 aa).

ATP is bound by residues Lys9, Phe57, Arg85, Thr91, Arg102, and Asn112. Catalysis depends on His115, which acts as the Pros-phosphohistidine intermediate.

Homohexamer. Requires Mg(2+) as cofactor.

The catalysed reaction is a 2'-deoxyribonucleoside 5'-diphosphate + ATP = a 2'-deoxyribonucleoside 5'-triphosphate + ADP. The enzyme catalyses a ribonucleoside 5'-diphosphate + ATP = a ribonucleoside 5'-triphosphate + ADP. Major role in the synthesis of nucleoside triphosphates other than ATP. The ATP gamma phosphate is transferred to the NDP beta phosphate via a ping-pong mechanism, using a phosphorylated active-site intermediate. This NDK is microtubule-associated. This Oryza sativa subsp. indica (Rice) protein is Nucleoside diphosphate kinase 1 (NDKR).